We begin with the raw amino-acid sequence, 370 residues long: Peptide chain release factor 2 (370 aa).

Position 249 is an N5-methylglutamine (Q249).

This sequence belongs to the prokaryotic/mitochondrial release factor family. Methylated by PrmC. Methylation increases the termination efficiency of RF2.

The protein resides in the cytoplasm. Its function is as follows. Peptide chain release factor 2 directs the termination of translation in response to the peptide chain termination codons UGA and UAA. The polypeptide is Peptide chain release factor 2 (Kosmotoga olearia (strain ATCC BAA-1733 / DSM 21960 / TBF 19.5.1)).